Reading from the N-terminus, the 853-residue chain is DNA mismatch repair protein MutS (853 aa).

An ATP-binding site is contributed by 614-621; it reads GPNMGGKS.

This sequence belongs to the DNA mismatch repair MutS family.

Functionally, this protein is involved in the repair of mismatches in DNA. It is possible that it carries out the mismatch recognition step. This protein has a weak ATPase activity. The polypeptide is DNA mismatch repair protein MutS (Shigella boydii serotype 18 (strain CDC 3083-94 / BS512)).